Here is a 240-residue protein sequence, read N- to C-terminus: Probable phosphatase Pcar_2586 (240 aa).

Zn(2+)-binding residues include H12, H14, H20, H45, E78, H105, H136, D197, and H199.

The protein belongs to the PHP family. Zn(2+) serves as cofactor.

This is Probable phosphatase Pcar_2586 from Syntrophotalea carbinolica (strain DSM 2380 / NBRC 103641 / GraBd1) (Pelobacter carbinolicus).